Reading from the N-terminus, the 705-residue chain is Elongation factor G (705 aa).

Residues 8–290 enclose the tr-type G domain; sequence ERYRNFGIMA…GVVHLLPSPA (283 aa). Residues 17–24, 88–92, and 142–145 each bind GTP; these read AHIDAGKT, DTPGH, and NKMD. Positions 290–309 are disordered; sequence ADRPPVQGIDEDEKEDTRAA.

It belongs to the TRAFAC class translation factor GTPase superfamily. Classic translation factor GTPase family. EF-G/EF-2 subfamily.

It is found in the cytoplasm. In terms of biological role, catalyzes the GTP-dependent ribosomal translocation step during translation elongation. During this step, the ribosome changes from the pre-translocational (PRE) to the post-translocational (POST) state as the newly formed A-site-bound peptidyl-tRNA and P-site-bound deacylated tRNA move to the P and E sites, respectively. Catalyzes the coordinated movement of the two tRNA molecules, the mRNA and conformational changes in the ribosome. The sequence is that of Elongation factor G from Xanthomonas euvesicatoria pv. vesicatoria (strain 85-10) (Xanthomonas campestris pv. vesicatoria).